Here is a 150-residue protein sequence, read N- to C-terminus: Ribosomal RNA large subunit methyltransferase H (150 aa).

S-adenosyl-L-methionine-binding positions include Ala100 and 118–123; that span reads LSEMTF.

It belongs to the RNA methyltransferase RlmH family. In terms of assembly, homodimer.

It is found in the cytoplasm. It carries out the reaction pseudouridine(1915) in 23S rRNA + S-adenosyl-L-methionine = N(3)-methylpseudouridine(1915) in 23S rRNA + S-adenosyl-L-homocysteine + H(+). In terms of biological role, specifically methylates the pseudouridine at position 1915 (m3Psi1915) in 23S rRNA. The polypeptide is Ribosomal RNA large subunit methyltransferase H (Helicobacter pylori (strain Shi470)).